A 202-amino-acid polypeptide reads, in one-letter code: Probable chemoreceptor glutamine deamidase CheD 2 (202 aa).

It belongs to the CheD family.

The catalysed reaction is L-glutaminyl-[protein] + H2O = L-glutamyl-[protein] + NH4(+). Functionally, probably deamidates glutamine residues to glutamate on methyl-accepting chemotaxis receptors (MCPs), playing an important role in chemotaxis. The sequence is that of Probable chemoreceptor glutamine deamidase CheD 2 from Shewanella oneidensis (strain ATCC 700550 / JCM 31522 / CIP 106686 / LMG 19005 / NCIMB 14063 / MR-1).